We begin with the raw amino-acid sequence, 243 residues long: Ribosomal RNA small subunit methyltransferase E 2 (243 aa).

This sequence belongs to the RNA methyltransferase RsmE family.

The protein resides in the cytoplasm. The enzyme catalyses uridine(1498) in 16S rRNA + S-adenosyl-L-methionine = N(3)-methyluridine(1498) in 16S rRNA + S-adenosyl-L-homocysteine + H(+). Functionally, specifically methylates the N3 position of the uracil ring of uridine 1498 (m3U1498) in 16S rRNA. Acts on the fully assembled 30S ribosomal subunit. This Borreliella burgdorferi (strain ATCC 35210 / DSM 4680 / CIP 102532 / B31) (Borrelia burgdorferi) protein is Ribosomal RNA small subunit methyltransferase E 2 (rsmE2).